The following is a 371-amino-acid chain: Probable cysteine protease RDL5 (371 aa).

A signal peptide spans 1–23 (MGYAKSAMLIFLLALVIASCATA). A propeptide spans 24 to 143 (MDMSVVSSND…NRYKTSDGDV (120 aa)) (activation peptide). Residue asparagine 94 is glycosylated (N-linked (GlcNAc...) asparagine). 3 disulfides stabilise this stretch: cysteine 165-cysteine 206, cysteine 199-cysteine 239, and cysteine 298-cysteine 349. Residue cysteine 168 is part of the active site. Catalysis depends on residues histidine 304 and asparagine 324.

This sequence belongs to the peptidase C1 family. Expressed in roots, inflorescences and siliques.

In terms of biological role, possesses protease activity in vitro. This Arabidopsis thaliana (Mouse-ear cress) protein is Probable cysteine protease RDL5.